The sequence spans 582 residues: Transcription factor tau subunit sfc6 (582 aa).

Residues 1–97 (MGPKSKEYEN…SAKKQSSKGL (97 aa)) form a disordered region. Residues 18–39 (EDNDDDGDFVLENVMSEEDIEI) show a composition bias toward acidic residues. Residues 63 to 87 (QPLTPSSSKGAGNEPKSQNSSTTRG) are compositionally biased toward polar residues. WD repeat units follow at residues 221 to 262 (TQFL…NFKS), 268 to 314 (HDWG…VKFH), and 326 to 369 (FNDS…ECPL).

As to quaternary structure, component of the TFIIIC complex including sfc1, sfc3, sfc4, sfc6 and sfc7. The subunits are organized in two globular domains, tauA and tauB, connected by a proteolysis-sensitive and flexible linker. Interacts with sfc1, sfc3 and sfc4.

Its subcellular location is the nucleus. TFIIIC mediates tRNA and 5S RNA gene activation by binding to intragenic promoter elements. Upstream of the transcription start site, TFIIIC assembles the initiation complex TFIIIB-TFIIIC-tDNA, which is sufficient for RNA polymerase III recruitment and function. Part of the tauB domain of TFIIIC that binds boxB DNA promoter sites of tRNA and similar genes. Cooperates with sfc3 in DNA binding. Localizes to chromatin insulator sequence without recruiting RNA polymerase III and plays a role in nuclear organization. The polypeptide is Transcription factor tau subunit sfc6 (Schizosaccharomyces pombe (strain 972 / ATCC 24843) (Fission yeast)).